Consider the following 114-residue polypeptide: Probable 4-amino-4-deoxy-L-arabinose-phosphoundecaprenol flippase subunit ArnE (114 aa).

Helical transmembrane passes span 38–58, 64–84, and 94–114; these read LTLRWLAIAVVSLGLGMLLWL, LPLSVAYPMLSFNFVLVTLAA, and LRHWLGVAAIIFGILLMSWHL. The region spanning 43 to 112 is the EamA domain; it reads LAIAVVSLGL…IIFGILLMSW (70 aa).

Belongs to the ArnE family. Heterodimer of ArnE and ArnF.

It localises to the cell inner membrane. It participates in bacterial outer membrane biogenesis; lipopolysaccharide biosynthesis. In terms of biological role, translocates 4-amino-4-deoxy-L-arabinose-phosphoundecaprenol (alpha-L-Ara4N-phosphoundecaprenol) from the cytoplasmic to the periplasmic side of the inner membrane. This chain is Probable 4-amino-4-deoxy-L-arabinose-phosphoundecaprenol flippase subunit ArnE, found in Yersinia pseudotuberculosis serotype O:1b (strain IP 31758).